The chain runs to 147 residues: Transcriptional repressor NrdR (147 aa).

A zinc finger spans residues 3 to 34 (CPYCGNVETTVVETRESDEGDAVRRRRRCSAC). Residues 49–139 (PAVVKKNGDR…VYREFEDIDA (91 aa)) form the ATP-cone domain.

This sequence belongs to the NrdR family. It depends on Zn(2+) as a cofactor.

Negatively regulates transcription of bacterial ribonucleotide reductase nrd genes and operons by binding to NrdR-boxes. This chain is Transcriptional repressor NrdR, found in Leptothrix cholodnii (strain ATCC 51168 / LMG 8142 / SP-6) (Leptothrix discophora (strain SP-6)).